The chain runs to 714 residues: Probable metal-nicotianamine transporter YSL5 (714 aa).

A disordered region spans residues 17-44 (HELQETGFSPETEKVKNKNFEEDEEEED). The span at 27–36 (ETEKVKNKNF) shows a compositional bias: basic and acidic residues. The next 13 helical transmembrane spans lie at 67 to 87 (AFVV…KLNL), 90 to 110 (GIIP…VKTW), 135 to 155 (CVVA…LFGM), 175 to 195 (LGWI…SVVP), 236 to 256 (VLGK…FFTG), 295 to 315 (IINI…WPLI), 340 to 360 (VFIA…KVLS), 413 to 433 (IPTW…TAIL), 445 to 465 (ILVI…GAGL), 477 to 497 (LAIF…LAGL), 531 to 551 (FVSQ…VFWL), 593 to 613 (LVLC…KDSL), and 631 to 651 (FFLG…LFIW).

Belongs to the YSL (TC 2.A.67.2) family.

Its subcellular location is the membrane. Functionally, may be involved in the transport of nicotianamine-chelated metals. This is Probable metal-nicotianamine transporter YSL5 (YSL5) from Arabidopsis thaliana (Mouse-ear cress).